The following is a 1544-amino-acid chain: GATOR complex protein Iml1 (1544 aa).

Disordered regions lie at residues 615–649 (QAVPAKPTQAGQQRPLQQTQSNNNNDQEDYGCENG) and 1037–1072 (RRHSTSIISRPQPNQGLTNSPFRERVGSNRLPEKRP). Polar residues-rich tracts occupy residues 623–639 (QAGQQRPLQQTQSNNNN) and 1041–1057 (TSIISRPQPNQGLTNSP). The span at 1058 to 1072 (FRERVGSNRLPEKRP) shows a compositional bias: basic and acidic residues.

Belongs to the IML1 family. In terms of assembly, component of the GATOR complex consisting of mio, Nup44A/Seh1, Im11, Nplr3, Nplr2, Wdr24, Wdr59 and Sec13. Within the GATOR complex, probable component of the GATOR1 subcomplex which is likely composed of Iml1, Nplr2 and Nplr3.

An essential component of the GATOR subcomplex GATOR1 which functions as an inhibitor of the amino acid-sensing branch of the TORC1 signaling pathway. The two GATOR subcomplexes, GATOR1 and GATOR2, regulate the TORC1 pathway in order to mediate metabolic homeostasis, female gametogenesis and the response to amino acid limitation and complete starvation. The function of GATOR1 in negatively regulating the TORC1 pathway is essential for maintaining baseline levels of TORC1 activity under nutrient rich conditions, and for promoting survival during amino acid or complete starvation by inhibiting TORC1-dependent cell growth and promoting catabolic metabolism and autophagy. GATOR1 and GATOR2 act at different stages of oogenesis to regulate TORC1 in order to control meiotic entry and promote oocyte growth and development. After exactly four mitotic cyst divisions, the GATOR1 complex members (Iml1, Nprl2 and Nprl3) down-regulate TORC1 to slow cellular metabolism and promote the mitotic/meiotic transition. At later stages of oogenesis, the mio and Nup44A components of the GATOR2 complex inhibit GATOR1 and thus activate TORC1 to promote meiotic progression, and drive oocyte growth and development. The protein is GATOR complex protein Iml1 of Drosophila melanogaster (Fruit fly).